We begin with the raw amino-acid sequence, 120 residues long: MKHSNRLTRREEYSRVLASGGTYIGQLAVMKAVPNSLELSRVGFIVSKKVGGAVERNRAKRILRESLRTTGLKQGWDIVFIARAKAATVKCAEMERVVKHLLGKAQILSKANEKTSSKAD.

It belongs to the RnpA family. Consists of a catalytic RNA component (M1 or rnpB) and a protein subunit.

It carries out the reaction Endonucleolytic cleavage of RNA, removing 5'-extranucleotides from tRNA precursor.. Functionally, RNaseP catalyzes the removal of the 5'-leader sequence from pre-tRNA to produce the mature 5'-terminus. It can also cleave other RNA substrates such as 4.5S RNA. The protein component plays an auxiliary but essential role in vivo by binding to the 5'-leader sequence and broadening the substrate specificity of the ribozyme. The sequence is that of Ribonuclease P protein component from Dehalococcoides mccartyi (strain ATCC BAA-2266 / KCTC 15142 / 195) (Dehalococcoides ethenogenes (strain 195)).